Reading from the N-terminus, the 813-residue chain is Histone acetyltransferase KAT2B (813 aa).

2 disordered regions span residues 1–55 (MAEA…GGSA) and 380–423 (NSTS…EAKR). Low complexity predominate over residues 32–46 (ASCGPATAVAAAGTA). Over residues 380–391 (NSTSHEQINGGR) the composition is skewed to polar residues. Residues 406-423 (PGEKRKMNNSHAPEEAKR) show a composition bias toward basic and acidic residues. Residues 484–632 (LNQKPNKKIL…GATLMGCELN (149 aa)) enclose the N-acetyltransferase domain. Glutamate 551 acts as the Proton donor/acceptor in catalysis. Acetyl-CoA-binding positions include 555–557 (CAV), 562–568 (QVKGYGT), and 593–596 (YAIG). Residues 704-808 (KDPEQLYSTL…KFFFSKIKEA (105 aa)) form the Bromo domain.

Belongs to the acetyltransferase family. GCN5 subfamily. Interacts with BCAS3. Interacts with SIRT1. Interacts with EP300, CREBBP and DDX17. Component of a large chromatin remodeling complex, at least composed of MYSM1, KAT2B/PCAF, RBM10 and KIF11/TRIP5. Interacts with KLF1; the interaction does not acetylate KLF1 and there is no enhancement of its transactivational activity. Interacts with NFE4. Interacts with MECOM. Interacts with NR2C2 (hypophosphorylated and unsumoylated form); the interaction promotes the transactivation activity of NR2C2. Interacts with NFE4. Interacts with MECOM. Interacts with E2F1; the interaction acetylates E2F1 augmenting its DNA-binding and transcriptional activity. Interacts with NPAS2, BMAL1 and CLOCK. Interacts (unsumoylated form) with NR2C1; the interaction promotes transactivation activity. Interacts with CEBPB. Interacts with NR4A3. Interacts with TBX5. Interacts with PLK4. Interacts with RB1; this interaction leads to RB1 acetylation. Interacts with VRK1.

Its subcellular location is the nucleus. It is found in the cytoplasm. It localises to the cytoskeleton. The protein localises to the microtubule organizing center. The protein resides in the centrosome. The catalysed reaction is L-lysyl-[histone] + acetyl-CoA = N(6)-acetyl-L-lysyl-[histone] + CoA + H(+). It carries out the reaction L-lysyl-[protein] + acetyl-CoA = N(6)-acetyl-L-lysyl-[protein] + CoA + H(+). It catalyses the reaction spermidine + acetyl-CoA = N(8)-acetylspermidine + CoA + H(+). Its function is as follows. Functions as a histone acetyltransferase (HAT) to promote transcriptional activation. Has significant histone acetyltransferase activity with core histones (H3 and H4), and also with nucleosome core particles. Has a a strong preference for acetylation of H3 at 'Lys-9' (H3K9ac). Also acetylates non-histone proteins, such as ACLY, MAPRE1/EB1, PLK4, RRP9/U3-55K and TBX5. Acts as a circadian transcriptional coactivator which enhances the activity of the circadian transcriptional activators: NPAS2-BMAL1 and CLOCK-BMAL1 heterodimers. Involved in heart and limb development by mediating acetylation of TBX5, acetylation regulating nucleocytoplasmic shuttling of TBX5. Acts as a negative regulator of centrosome amplification by mediating acetylation of PLK4. Acetylates RRP9/U3-55K, a core subunit of the U3 snoRNP complex, impairing pre-rRNA processing. Acetylates MAPRE1/EB1, promoting dynamic kinetochore-microtubule interactions in early mitosis. Also acetylates spermidine. The chain is Histone acetyltransferase KAT2B from Mus musculus (Mouse).